The following is a 437-amino-acid chain: Enolase 2 (437 aa).

A Glycyl lysine isopeptide (Lys-Gly) (interchain with G-Cter in ubiquitin) cross-link involves residue K60. Position 138 is a phosphoserine (S138). Residue H160 is part of the active site. S188 carries the post-translational modification Phosphoserine. K243 participates in a covalent cross-link: Glycyl lysine isopeptide (Lys-Gly) (interchain with G-Cter in ubiquitin). Mg(2+)-binding residues include D247 and E296. T313 carries the post-translational modification Phosphothreonine. D321 lines the Mg(2+) pocket. T324 bears the Phosphothreonine mark. Residue K358 forms a Glycyl lysine isopeptide (Lys-Gly) (interchain with G-Cter in ubiquitin) linkage.

It belongs to the enolase family. In terms of assembly, homodimer. Requires Mg(2+) as cofactor.

The protein localises to the cytoplasm. It catalyses the reaction (2R)-2-phosphoglycerate = phosphoenolpyruvate + H2O. Its pathway is carbohydrate degradation; glycolysis; pyruvate from D-glyceraldehyde 3-phosphate: step 4/5. In Saccharomyces cerevisiae (strain ATCC 204508 / S288c) (Baker's yeast), this protein is Enolase 2 (ENO2).